A 308-amino-acid polypeptide reads, in one-letter code: D-alanine--D-alanine ligase (308 aa).

The ATP-grasp domain maps to 108 to 303 (KLVWKAAGLP…YEALCLKVLE (196 aa)). 134 to 189 (EAELGLPMFVKPACEGSSLGVTKVRKAGELAQAYAEARKFDPLVLAEQFVGGGEYT) is a binding site for ATP. Residues aspartate 257, glutamate 270, and asparagine 272 each coordinate Mg(2+).

The protein belongs to the D-alanine--D-alanine ligase family. The cofactor is Mg(2+). Mn(2+) is required as a cofactor.

It is found in the cytoplasm. The enzyme catalyses 2 D-alanine + ATP = D-alanyl-D-alanine + ADP + phosphate + H(+). It functions in the pathway cell wall biogenesis; peptidoglycan biosynthesis. Functionally, cell wall formation. The sequence is that of D-alanine--D-alanine ligase from Laribacter hongkongensis (strain HLHK9).